A 285-amino-acid polypeptide reads, in one-letter code: 4-diphosphocytidyl-2-C-methyl-D-erythritol kinase (285 aa).

Lysine 9 is a catalytic residue. 89-99 (PLGAGLGGGSS) is an ATP binding site. Aspartate 131 is a catalytic residue.

It belongs to the GHMP kinase family. IspE subfamily.

It catalyses the reaction 4-CDP-2-C-methyl-D-erythritol + ATP = 4-CDP-2-C-methyl-D-erythritol 2-phosphate + ADP + H(+). It functions in the pathway isoprenoid biosynthesis; isopentenyl diphosphate biosynthesis via DXP pathway; isopentenyl diphosphate from 1-deoxy-D-xylulose 5-phosphate: step 3/6. In terms of biological role, catalyzes the phosphorylation of the position 2 hydroxy group of 4-diphosphocytidyl-2C-methyl-D-erythritol. This is 4-diphosphocytidyl-2-C-methyl-D-erythritol kinase from Thermodesulfovibrio yellowstonii (strain ATCC 51303 / DSM 11347 / YP87).